The sequence spans 257 residues: Homeobox protein goosecoid (257 aa).

The homeobox DNA-binding region spans 160 to 219; that stretch reads KRRHRTIFTDEQLEALENLFQETKYPDVGTREQLARKVHLREEKVEVWFKNRRAKWRRQK. Positions 213 to 257 are disordered; the sequence is AKWRRQKRSSSEESENAEKWNKTSSSKASPEKREEEGKSDLDSDS. The segment covering 241–257 has biased composition (basic and acidic residues); that stretch reads SPEKREEEGKSDLDSDS.

The protein belongs to the paired homeobox family. Bicoid subfamily.

The protein localises to the nucleus. Its function is as follows. Regulates chordin (CHRD). May play a role in spatial programing within discrete embryonic fields or lineage compartments during organogenesis. In concert with NKX3-2, plays a role in defining the structural components of the middle ear; required for the development of the entire tympanic ring. Probably involved in the regulatory networks that define neural crest cell fate specification and determine mesoderm cell lineages in mammals. This is Homeobox protein goosecoid (GSC) from Gorilla gorilla gorilla (Western lowland gorilla).